A 379-amino-acid polypeptide reads, in one-letter code: MIGLSTYRNLPTLLTTTTVISTALRSKQLLRFTTTTSTKSRSSTSTAATTVGNSNPKSPIDEDNLEKPGTIPTKHKPFNIQTEVYNKAGIEANDDDKFLTKPTYRHEDFTEAGVYRVHVTHRPPRTIGDKISCYGTLFFRKCFDLVTGYAVPDPDKPDQYKGTRWEMTEEKWMTRCIFLESIAGVPGSVAGFVRHLHSLRMLTRDKAWIETLHDEAYNERMHLLTFIKIGKPSWFTRSIIYIGQGVFTNIFFLVYLMNPRYCHRFVGYLEEEAVRTYTHLIDELDDPNKLPDFQKLPIPNIAVQYWPELTPESSFKDLILRIRADEAKHREINHTFANLEQWQDRNPFALKIKDSDKPQPNYNLDVTRPQGWERKDLYL.

Residues 33–50 show a composition bias toward low complexity; it reads TTTTSTKSRSSTSTAATT. Residues 33–76 form a disordered region; sequence TTTTSTKSRSSTSTAATTVGNSNPKSPIDEDNLEKPGTIPTKHK. The Fe cation site is built by Glu180, Glu219, and His222. The helical transmembrane segment at 234–256 threads the bilayer; it reads WFTRSIIYIGQGVFTNIFFLVYL. Residues Glu270, Glu271, Glu326, and His329 each contribute to the Fe cation site.

It belongs to the alternative oxidase family. The cofactor is Fe cation.

It is found in the mitochondrion inner membrane. Its function is as follows. Catalyzes cyanide-resistant oxygen consumption. May increase respiration when the cytochrome respiratory pathway is restricted, or in response to low temperatures. This is Alternative oxidase 1, mitochondrial (AOX1) from Candida albicans (Yeast).